We begin with the raw amino-acid sequence, 1671 residues long: Kinesin-like protein unc-104 (1671 aa).

The Kinesin motor domain occupies 3-351; sequence SVKVAVRVRP…LRYADRAKQI (349 aa). Position 97 to 104 (97 to 104) interacts with ATP; it reads GQTGAGKS. Positions 358–437 form a coiled coil; that stretch reads NEDANAKLIR…IAELNETWEE (80 aa). The segment at 391-413 is disordered; the sequence is DELNKSTTGIKSPSKSRNRNGST. Positions 395 to 413 are enriched in polar residues; that stretch reads KSTTGIKSPSKSRNRNGST. An FHA domain is found at 500 to 566; sequence TRLGTHEANV…LKTGSRVILG (67 aa). A coiled-coil region spans residues 577 to 674; it reads EQARELREKI…EEQSMTMSMY (98 aa). A disordered region spans residues 949–973; the sequence is DVDSGRGIDSNSASDCPENAEEPGE. The PH domain maps to 1538–1636; that stretch reads VVARKGLLNV…WLYAINPLLA (99 aa).

The protein belongs to the TRAFAC class myosin-kinesin ATPase superfamily. Kinesin family. Unc-104 subfamily. Monomer.

It is found in the cytoplasm. The protein resides in the cytoskeleton. Its function is as follows. Required for presynaptic maturation, has a role in axonal transport of dense-core vesicles carrying synaptic vesicle precursors, components required for the morphological transformation of axonal growth cones to mature boutons. In Drosophila pseudoobscura pseudoobscura (Fruit fly), this protein is Kinesin-like protein unc-104.